The sequence spans 165 residues: C-phycoerythrin class 2 subunit alpha (165 aa).

A phycourobilin-binding site is contributed by C75. (2R,3E)-phycoerythrobilin contacts are provided by C83 and C140.

It belongs to the phycobiliprotein family. As to quaternary structure, heterodimer of an alpha and a beta chain. Contains two covalently linked phycoerythrobilin chromophores and one covalently linked phycourobilin chromophore.

It localises to the cellular thylakoid membrane. In terms of biological role, light-harvesting photosynthetic bile pigment-protein from the phycobiliprotein complex. In Synechococcus sp. (strain WH8020), this protein is C-phycoerythrin class 2 subunit alpha (mpeA).